The primary structure comprises 96 residues: Cell division protein FtsB (96 aa).

Topologically, residues 1-11 are cytoplasmic; that stretch reads MDIKSNSFFYI. Residues 12 to 29 traverse the membrane as a helical segment; sequence FISVVLLLIAILQYDLWF. The Periplasmic segment spans residues 30 to 96; the sequence is SNTGFIKYQA…KQGEVFYSVK (67 aa).

This sequence belongs to the FtsB family. In terms of assembly, part of a complex composed of FtsB, FtsL and FtsQ.

Its subcellular location is the cell inner membrane. Functionally, essential cell division protein. May link together the upstream cell division proteins, which are predominantly cytoplasmic, with the downstream cell division proteins, which are predominantly periplasmic. This chain is Cell division protein FtsB, found in Francisella tularensis subsp. tularensis (strain SCHU S4 / Schu 4).